We begin with the raw amino-acid sequence, 625 residues long: FMRFamide-activated amiloride-sensitive sodium channel (625 aa).

Residues 1-67 (MKYTSAATKP…IVTSRDTKRK (67 aa)) lie on the Cytoplasmic side of the membrane. A helical membrane pass occupies residues 68–89 (VIWALLVIAGFTAATLQLSLLV). Topologically, residues 90–536 (RKYLQFQVVE…LADLFADIGG (447 aa)) are extracellular. N-linked (GlcNAc...) asparagine glycans are attached at residues N134, N196, N303, N349, N365, N372, and N473. A helical transmembrane segment spans residues 537 to 557 (TLGLWMGISVLTIMELIELVI). The Cytoplasmic segment spans residues 558-625 (RLTGLVFNSE…DFRRGVESPV (68 aa)). The disordered stretch occupies residues 570 to 591 (LPRGPTTVNNNNGSNNHSQSTS). The span at 575-591 (TTVNNNNGSNNHSQSTS) shows a compositional bias: low complexity.

Belongs to the amiloride-sensitive sodium channel (TC 1.A.6) family. As to expression, muscle and nervous tissue.

It is found in the membrane. FMRFamide-gated ionotropic receptor. The polypeptide is FMRFamide-activated amiloride-sensitive sodium channel (Cornu aspersum (Brown garden snail)).